An 87-amino-acid polypeptide reads, in one-letter code: uncharacterized protein (87 aa).

A helical transmembrane segment spans residues 44–64 (DALYLAGSTIFTIVTTLVAWF).

It belongs to the SPP1 holin family.

The protein resides in the membrane. This is an uncharacterized protein from Bacillus licheniformis.